A 121-amino-acid chain; its full sequence is Large ribosomal subunit protein uL24 (121 aa).

It belongs to the universal ribosomal protein uL24 family. As to quaternary structure, part of the 50S ribosomal subunit.

In terms of biological role, one of two assembly initiator proteins, it binds directly to the 5'-end of the 23S rRNA, where it nucleates assembly of the 50S subunit. Its function is as follows. Located at the polypeptide exit tunnel on the outside of the subunit. The polypeptide is Large ribosomal subunit protein uL24 (Pyrococcus horikoshii (strain ATCC 700860 / DSM 12428 / JCM 9974 / NBRC 100139 / OT-3)).